The following is a 163-amino-acid chain: 2,3-dimethylmalate dehydratase small subunit (163 aa).

Belongs to the LeuD family. LeuD type 2 subfamily. In terms of assembly, heterodimer of a large and a small subunit.

The enzyme catalyses (2R,3S)-2,3-dimethylmalate = dimethylmaleate + H2O. It functions in the pathway cofactor degradation; nicotinate degradation; propanoate and pyruvate from 6-hydroxynicotinate: step 7/8. The polypeptide is 2,3-dimethylmalate dehydratase small subunit (Eubacterium barkeri (Clostridium barkeri)).